Here is a 155-residue protein sequence, read N- to C-terminus: MSVSRRVIHHGLYFAVLGPLIGVLFLVLYIFFAKEPLVLWVIIHPIFLLLSITTGAIPALLTGVMVACLPEKIGSQKRYRCLAGGIGGVVITEIYCAVIVHIKGMASSELFENILSGDSLVVRIIPALLAGVVMSRIITRLPGLDISCPETDSLS.

Residues 1 to 11 are Cytoplasmic-facing; it reads MSVSRRVIHHG. Residues 12 to 32 form a helical membrane-spanning segment; that stretch reads LYFAVLGPLIGVLFLVLYIFF. The Periplasmic segment spans residues 33–36; it reads AKEP. The helical transmembrane segment at 37 to 57 threads the bilayer; sequence LVLWVIIHPIFLLLSITTGAI. Over 58–81 the chain is Cytoplasmic; it reads PALLTGVMVACLPEKIGSQKRYRC. Residues 82–102 form a helical membrane-spanning segment; the sequence is LAGGIGGVVITEIYCAVIVHI. Residues 103-113 are Periplasmic-facing; that stretch reads KGMASSELFEN. A helical membrane pass occupies residues 114-134; it reads ILSGDSLVVRIIPALLAGVVM. Over 135 to 155 the chain is Cytoplasmic; that stretch reads SRIITRLPGLDISCPETDSLS.

Belongs to the CbrB family.

The protein localises to the cell inner membrane. In Escherichia coli (strain K12), this protein is Inner membrane protein CbrB (cbrB).